Here is a 648-residue protein sequence, read N- to C-terminus: Threonine--tRNA ligase (648 aa).

The TGS domain occupies 1 to 61; sequence MINITFPDGA…DTDGSIEIVT (61 aa). The catalytic stretch occupies residues 242-540; it reads DHRKLGKELD…LIETYKGAFP (299 aa). Cys336, His387, and His517 together coordinate Zn(2+).

The protein belongs to the class-II aminoacyl-tRNA synthetase family. Homodimer. Zn(2+) serves as cofactor.

It is found in the cytoplasm. The catalysed reaction is tRNA(Thr) + L-threonine + ATP = L-threonyl-tRNA(Thr) + AMP + diphosphate + H(+). In terms of biological role, catalyzes the attachment of threonine to tRNA(Thr) in a two-step reaction: L-threonine is first activated by ATP to form Thr-AMP and then transferred to the acceptor end of tRNA(Thr). Also edits incorrectly charged L-seryl-tRNA(Thr). The sequence is that of Threonine--tRNA ligase from Streptococcus uberis (strain ATCC BAA-854 / 0140J).